Reading from the N-terminus, the 475-residue chain is Aspartyl/glutamyl-tRNA(Asn/Gln) amidotransferase subunit B (475 aa).

The protein belongs to the GatB/GatE family. GatB subfamily. As to quaternary structure, heterotrimer of A, B and C subunits.

The enzyme catalyses L-glutamyl-tRNA(Gln) + L-glutamine + ATP + H2O = L-glutaminyl-tRNA(Gln) + L-glutamate + ADP + phosphate + H(+). The catalysed reaction is L-aspartyl-tRNA(Asn) + L-glutamine + ATP + H2O = L-asparaginyl-tRNA(Asn) + L-glutamate + ADP + phosphate + 2 H(+). Its function is as follows. Allows the formation of correctly charged Asn-tRNA(Asn) or Gln-tRNA(Gln) through the transamidation of misacylated Asp-tRNA(Asn) or Glu-tRNA(Gln) in organisms which lack either or both of asparaginyl-tRNA or glutaminyl-tRNA synthetases. The reaction takes place in the presence of glutamine and ATP through an activated phospho-Asp-tRNA(Asn) or phospho-Glu-tRNA(Gln). This is Aspartyl/glutamyl-tRNA(Asn/Gln) amidotransferase subunit B from Thiobacillus denitrificans (strain ATCC 25259 / T1).